Reading from the N-terminus, the 279-residue chain is Shikimate dehydrogenase (NADP(+)) (279 aa).

Shikimate is bound by residues 17–19 (SQS) and Thr64. Residue Lys68 is the Proton acceptor of the active site. Residues Asn89 and Asp105 each contribute to the shikimate site. NADP(+) is bound by residues 130-134 (GAGGA) and Leu218. Tyr220 contacts shikimate. An NADP(+)-binding site is contributed by Gly242.

This sequence belongs to the shikimate dehydrogenase family. As to quaternary structure, homodimer.

The enzyme catalyses shikimate + NADP(+) = 3-dehydroshikimate + NADPH + H(+). The protein operates within metabolic intermediate biosynthesis; chorismate biosynthesis; chorismate from D-erythrose 4-phosphate and phosphoenolpyruvate: step 4/7. Functionally, involved in the biosynthesis of the chorismate, which leads to the biosynthesis of aromatic amino acids. Catalyzes the reversible NADPH linked reduction of 3-dehydroshikimate (DHSA) to yield shikimate (SA). The chain is Shikimate dehydrogenase (NADP(+)) from Methylococcus capsulatus (strain ATCC 33009 / NCIMB 11132 / Bath).